Here is a 77-residue protein sequence, read N- to C-terminus: Acyl carrier protein (77 aa).

The Carrier domain maps to 2 to 77; sequence SDVAEKVKKI…DAIAYIEEKK (76 aa). Ser-37 bears the O-(pantetheine 4'-phosphoryl)serine mark.

This sequence belongs to the acyl carrier protein (ACP) family. Post-translationally, 4'-phosphopantetheine is transferred from CoA to a specific serine of apo-ACP by AcpS. This modification is essential for activity because fatty acids are bound in thioester linkage to the sulfhydryl of the prosthetic group.

Its subcellular location is the cytoplasm. It participates in lipid metabolism; fatty acid biosynthesis. Its function is as follows. Carrier of the growing fatty acid chain in fatty acid biosynthesis. The polypeptide is Acyl carrier protein (Desulfovibrio desulfuricans (strain ATCC 27774 / DSM 6949 / MB)).